A 348-amino-acid chain; its full sequence is Casein kinase II subunit alpha (348 aa).

In terms of domain architecture, Protein kinase spans 55-340 (YEIVRKIGRG…PLEAMEHPFF (286 aa)). Residues 61–69 (IGRGKFSEV) and K84 each bind ATP. D172 acts as the Proton acceptor in catalysis.

It belongs to the protein kinase superfamily. Ser/Thr protein kinase family. CK2 subfamily. In terms of assembly, tetramer of two alpha and two beta chains.

It is found in the cytoplasm. The catalysed reaction is L-seryl-[protein] + ATP = O-phospho-L-seryl-[protein] + ADP + H(+). It carries out the reaction L-threonyl-[protein] + ATP = O-phospho-L-threonyl-[protein] + ADP + H(+). Its function is as follows. Casein kinases are operationally defined by their preferential utilization of acidic proteins such as caseins as substrates. The alpha chain contains the catalytic site. In Theileria annulata, this protein is Casein kinase II subunit alpha.